Here is a 725-residue protein sequence, read N- to C-terminus: Glutamine-dependent NAD(+) synthetase (725 aa).

In terms of domain architecture, CN hydrolase spans 5–275 (VTVATCALNQ…VEVLTATLDL (271 aa)). Catalysis depends on Glu-45, which acts as the Proton acceptor; for glutaminase activity. The active-site For glutaminase activity is the Lys-114. Residue Cys-175 is the Nucleophile; for glutaminase activity of the active site. The interval 325–706 (YHRPEEEISL…KASQTREEQV (382 aa)) is ligase. Residue 355–362 (PLSGGVDS) coordinates ATP. Ser-357 is an active-site residue.

The protein in the C-terminal section; belongs to the NAD synthetase family. Homohexamer. As to expression, highly expressed in small intestine, kidney, liver and testis. Weakly expressed in skeletal muscle, spleen, lung, heart and brain.

It catalyses the reaction deamido-NAD(+) + L-glutamine + ATP + H2O = L-glutamate + AMP + diphosphate + NAD(+) + H(+). The protein operates within cofactor biosynthesis; NAD(+) biosynthesis; NAD(+) from deamido-NAD(+) (L-Gln route): step 1/1. Its function is as follows. Catalyzes the final step of the nicotinamide adenine dinucleotide (NAD) de novo synthesis pathway, the ATP-dependent amidation of deamido-NAD using L-glutamine as a nitrogen source. This is Glutamine-dependent NAD(+) synthetase (Nadsyn1) from Mus musculus (Mouse).